Consider the following 276-residue polypeptide: NADPH-dependent 7-cyano-7-deazaguanine reductase (276 aa).

83-85 provides a ligand contact to substrate; sequence IES. 85–86 provides a ligand contact to NADPH; the sequence is SK. Cysteine 184 (thioimide intermediate) is an active-site residue. Aspartate 191 serves as the catalytic Proton donor. 223–224 is a binding site for substrate; that stretch reads HE. 252–253 contributes to the NADPH binding site; sequence RG.

This sequence belongs to the GTP cyclohydrolase I family. QueF type 2 subfamily. Homodimer.

The protein localises to the cytoplasm. The catalysed reaction is 7-aminomethyl-7-carbaguanine + 2 NADP(+) = 7-cyano-7-deazaguanine + 2 NADPH + 3 H(+). It participates in tRNA modification; tRNA-queuosine biosynthesis. Catalyzes the NADPH-dependent reduction of 7-cyano-7-deazaguanine (preQ0) to 7-aminomethyl-7-deazaguanine (preQ1). This is NADPH-dependent 7-cyano-7-deazaguanine reductase from Ectopseudomonas mendocina (strain ymp) (Pseudomonas mendocina).